The sequence spans 360 residues: Phospho-N-acetylmuramoyl-pentapeptide-transferase (360 aa).

Helical transmembrane passes span 26–46 (GVLA…FFIA), 70–90 (GTPT…TLLW), 94–114 (GNPL…IGFV), 136–156 (LQSL…SNPV), 164–184 (FIPH…YFVI), 199–219 (GLAI…AYVS), 236–256 (SGQM…FLWF), 263–283 (VFMG…VAIV), 289–309 (VLFI…IQVV), and 339–359 (AVRF…SLKI).

Belongs to the glycosyltransferase 4 family. MraY subfamily. The cofactor is Mg(2+).

Its subcellular location is the cell inner membrane. The enzyme catalyses UDP-N-acetyl-alpha-D-muramoyl-L-alanyl-gamma-D-glutamyl-meso-2,6-diaminopimeloyl-D-alanyl-D-alanine + di-trans,octa-cis-undecaprenyl phosphate = di-trans,octa-cis-undecaprenyl diphospho-N-acetyl-alpha-D-muramoyl-L-alanyl-D-glutamyl-meso-2,6-diaminopimeloyl-D-alanyl-D-alanine + UMP. It functions in the pathway cell wall biogenesis; peptidoglycan biosynthesis. Functionally, catalyzes the initial step of the lipid cycle reactions in the biosynthesis of the cell wall peptidoglycan: transfers peptidoglycan precursor phospho-MurNAc-pentapeptide from UDP-MurNAc-pentapeptide onto the lipid carrier undecaprenyl phosphate, yielding undecaprenyl-pyrophosphoryl-MurNAc-pentapeptide, known as lipid I. This Acidithiobacillus ferrooxidans (strain ATCC 23270 / DSM 14882 / CIP 104768 / NCIMB 8455) (Ferrobacillus ferrooxidans (strain ATCC 23270)) protein is Phospho-N-acetylmuramoyl-pentapeptide-transferase.